The following is a 345-amino-acid chain: Phosphoribosylformylglycinamidine cyclo-ligase (345 aa).

The protein belongs to the AIR synthase family.

The protein localises to the cytoplasm. It carries out the reaction 2-formamido-N(1)-(5-O-phospho-beta-D-ribosyl)acetamidine + ATP = 5-amino-1-(5-phospho-beta-D-ribosyl)imidazole + ADP + phosphate + H(+). It functions in the pathway purine metabolism; IMP biosynthesis via de novo pathway; 5-amino-1-(5-phospho-D-ribosyl)imidazole from N(2)-formyl-N(1)-(5-phospho-D-ribosyl)glycinamide: step 2/2. This is Phosphoribosylformylglycinamidine cyclo-ligase from Escherichia coli (strain 55989 / EAEC).